The following is a 2534-amino-acid chain: Highly reducing polyketide synthase easB (2534 aa).

Residues methionine 1–leucine 49 are disordered. The Ketosynthase family 3 (KS3) domain occupies leucine 49 to alanine 470. Active-site for beta-ketoacyl synthase activity residues include cysteine 222, histidine 356, and histidine 396. A malonyl-CoA:ACP transacylase (MAT) domain region spans residues isoleucine 587–lysine 885. Residues histidine 973–valine 1111 are N-terminal hotdog fold. Residues histidine 973–glycine 1273 are dehydratase (DH) domain. Positions histidine 973–alanine 1277 constitute a PKS/mFAS DH domain. Histidine 1005 serves as the catalytic Proton acceptor; for dehydratase activity. The interval threonine 1131–alanine 1277 is C-terminal hotdog fold. The active-site Proton donor; for dehydratase activity is aspartate 1193. The tract at residues lysine 1395–arginine 1625 is methyltransferase (CMet) domain. The segment at glycine 1834–leucine 2146 is enoyl reductase (ER) domain. Residues glutamate 2452 to serine 2529 enclose the Carrier domain. The interval alanine 2453–alanine 2526 is ketoreductase (KR) domain. O-(pantetheine 4'-phosphoryl)serine is present on serine 2489.

The protein operates within antibiotic biosynthesis. Polyketide synthase; part of the gene cluster that mediates the biosynthesis of emericellamides, secondary metabolites acting as antibiotics. The biosynthesis of emericellamides initiates from the highly reducing polyketide synthase easB which catalyzes the formation of the linear polyketide chain. EasB produces several polyketides that can be further processed by the downstream enzymes. The polyketides are released from easB as linear polyketide carboxylic acids, which are converted to CoA thioesters by the acyl-CoA ligase easD. The substrates are then loaded onto the acyltransferase easC, which shuttles them to the first thiolation (T) domain of the nonribosomal peptide synthetase easA. EasA then performs condensation of the polyketides with one glycine, two alanine, one valine and one leucine residues. A last step of cyclization leads to the production of emericellamides. The protein is Highly reducing polyketide synthase easB of Emericella nidulans (strain FGSC A4 / ATCC 38163 / CBS 112.46 / NRRL 194 / M139) (Aspergillus nidulans).